A 619-amino-acid polypeptide reads, in one-letter code: DNA mismatch repair protein MutL (619 aa).

Belongs to the DNA mismatch repair MutL/HexB family.

In terms of biological role, this protein is involved in the repair of mismatches in DNA. It is required for dam-dependent methyl-directed DNA mismatch repair. May act as a 'molecular matchmaker', a protein that promotes the formation of a stable complex between two or more DNA-binding proteins in an ATP-dependent manner without itself being part of a final effector complex. This chain is DNA mismatch repair protein MutL, found in Shewanella frigidimarina (strain NCIMB 400).